Reading from the N-terminus, the 441-residue chain is POC1 centriolar protein homolog A (441 aa).

WD repeat units lie at residues 16-55 (GHRDTVTAVDFNANTKQLASGSMDSCLMVWNMKTQMRAYR), 58-97 (GHKDAILSVDFSPSGHLIASASRDKTVRLWVPSVKGESTA), 100-139 (AHTGTVRSVSFSGDGQSLVTASDDKTIKVWTVHRQKFLFS), 142-181 (QHINWVRCAKFSPDGRLIVSASDDKTIKLWDKTSRECIQS), 184-223 (EHGGFVNFVDFHPSGTCIAAAATDNTVKVWDIRMNKLIQH), 226-265 (VHSGVVNSLSFHPSGNYLITASNDSTLKVLDLLEGRLLYT), and 268-307 (GHQGPVTCVKFSREGDFFASGGSDEQVMVWKTNFDAGSYP). The disordered stretch occupies residues 347-376 (DLEPHITEMSVKDRSSPLSYTSRSVDQHHP). Basic and acidic residues predominate over residues 348–361 (LEPHITEMSVKDRS). Residues 400–427 (LTRTVGILEQRLSLTEDKLKECIEQQQA) adopt a coiled-coil conformation.

This sequence belongs to the WD repeat POC1 family. As to quaternary structure, interacts with pat.

It is found in the cytoplasm. Its subcellular location is the cytoskeleton. Its function is as follows. May play an important role in centriole assembly and/or stability and ciliogenesis. In Xenopus laevis (African clawed frog), this protein is POC1 centriolar protein homolog A (poc1a).